The chain runs to 232 residues: 7-cyano-7-deazaguanine synthase (232 aa).

8-18 (FSGGQDSTTCL) is a binding site for ATP. Zn(2+) contacts are provided by C189, C198, C201, and C204.

It belongs to the QueC family. Zn(2+) is required as a cofactor.

It catalyses the reaction 7-carboxy-7-deazaguanine + NH4(+) + ATP = 7-cyano-7-deazaguanine + ADP + phosphate + H2O + H(+). It functions in the pathway purine metabolism; 7-cyano-7-deazaguanine biosynthesis. Catalyzes the ATP-dependent conversion of 7-carboxy-7-deazaguanine (CDG) to 7-cyano-7-deazaguanine (preQ(0)). The protein is 7-cyano-7-deazaguanine synthase of Proteus mirabilis (strain HI4320).